The chain runs to 365 residues: Chorismate synthase (365 aa).

A disordered region spans residues Met-41–Arg-60. 2 residues coordinate NADP(+): Arg-48 and Arg-54. Residues Arg-125 to Ser-127, Asn-238 to Ala-239, Gly-278, Lys-293 to Ser-297, and Arg-319 contribute to the FMN site.

Belongs to the chorismate synthase family. Homotetramer. FMNH2 serves as cofactor.

It carries out the reaction 5-O-(1-carboxyvinyl)-3-phosphoshikimate = chorismate + phosphate. It functions in the pathway metabolic intermediate biosynthesis; chorismate biosynthesis; chorismate from D-erythrose 4-phosphate and phosphoenolpyruvate: step 7/7. Its function is as follows. Catalyzes the anti-1,4-elimination of the C-3 phosphate and the C-6 proR hydrogen from 5-enolpyruvylshikimate-3-phosphate (EPSP) to yield chorismate, which is the branch point compound that serves as the starting substrate for the three terminal pathways of aromatic amino acid biosynthesis. This reaction introduces a second double bond into the aromatic ring system. The sequence is that of Chorismate synthase from Shewanella amazonensis (strain ATCC BAA-1098 / SB2B).